Consider the following 759-residue polypeptide: Pseudocleavage protein nop-1 (759 aa).

Disordered regions lie at residues 1–46, 334–361, 379–413, 440–495, and 732–759; these read MSAP…SSIF, KIFPGKSESKDRRMSDNNQASEQYMDKK, LSVNDSASKNPKDLTESPQQPKLRKKTASSSNLSQ, QSSR…KKER, and ESDGPASSNDDFDTQSTASTSTVFGAKI. Positions 10-42 are enriched in basic and acidic residues; that stretch reads DIHSDDRDHADHQTKKEKHWFEEKSEQNGENRR. The segment covering 448–465 has biased composition (low complexity); it reads TGNSSISSGVGSIASGTS. Positions 473–482 are enriched in polar residues; it reads GSRSGQSISR. Positions 485-495 are enriched in basic and acidic residues; it reads SRRDDEGKKER. The segment covering 736–759 has biased composition (polar residues); the sequence is PASSNDDFDTQSTASTSTVFGAKI.

It is found in the nucleus. Its subcellular location is the cytoplasm. The protein resides in the cell cortex. The protein localises to the cleavage furrow. Its function is as follows. Required for formation of the pseudocleavage furrow during the first cleavage of the embryo and also mediates aster-induced furrowing during cytokinesis. Promotes cortical recruitment of ani-1 and nmy-2 during pseudocleavage and cytokinesis and promotes the accumulation of actin at furrowing regions. Regulates establishment of embryonic cell polarity. The chain is Pseudocleavage protein nop-1 (nop-1) from Caenorhabditis elegans.